The following is a 356-amino-acid chain: tRNA-specific 2-thiouridylase MnmA (356 aa).

ATP is bound at residue 6-13; that stretch reads AVSGGTDS. Residue Cys95 is the Nucleophile of the active site. Cys95 and Cys195 are joined by a disulfide. Gly119 is an ATP binding site. Residues 145–147 form an interaction with tRNA region; it reads KDQ. The Cysteine persulfide intermediate role is filled by Cys195. The interaction with tRNA stretch occupies residues 300 to 301; sequence RY.

Belongs to the MnmA/TRMU family.

The protein localises to the cytoplasm. The catalysed reaction is S-sulfanyl-L-cysteinyl-[protein] + uridine(34) in tRNA + AH2 + ATP = 2-thiouridine(34) in tRNA + L-cysteinyl-[protein] + A + AMP + diphosphate + H(+). In terms of biological role, catalyzes the 2-thiolation of uridine at the wobble position (U34) of tRNA, leading to the formation of s(2)U34. This Oleidesulfovibrio alaskensis (strain ATCC BAA-1058 / DSM 17464 / G20) (Desulfovibrio alaskensis) protein is tRNA-specific 2-thiouridylase MnmA.